The primary structure comprises 2282 residues: Ectopic P granules protein 5 homolog (2282 aa).

The protein belongs to the EPG5 family.

Its function is as follows. Involved in autophagy. This chain is Ectopic P granules protein 5 homolog, found in Aedes aegypti (Yellowfever mosquito).